Reading from the N-terminus, the 388-residue chain is Na(+)/H(+) antiporter NhaA (388 aa).

Transmembrane regions (helical) follow at residues 8 to 28 (FLKL…IALI), 33 to 53 (PLQG…FAAL), 59 to 79 (LLLW…GLEV), 95 to 115 (LFPV…YLLF), 125 to 145 (GWAI…ALLS), 154 to 174 (VFLL…IALF), 179 to 199 (VSLV…WMNW), 217 to 237 (VCIL…GFLI), 259 to 279 (VAYL…LNGV), 287 to 307 (ILPL…IFLF), 328 to 348 (IFAV…ISGL), and 363 to 383 (LGIL…LRMV).

It belongs to the NhaA Na(+)/H(+) (TC 2.A.33) antiporter family.

It localises to the cell inner membrane. It carries out the reaction Na(+)(in) + 2 H(+)(out) = Na(+)(out) + 2 H(+)(in). Na(+)/H(+) antiporter that extrudes sodium in exchange for external protons. This Photorhabdus laumondii subsp. laumondii (strain DSM 15139 / CIP 105565 / TT01) (Photorhabdus luminescens subsp. laumondii) protein is Na(+)/H(+) antiporter NhaA.